Here is a 314-residue protein sequence, read N- to C-terminus: Small ribosomal subunit biogenesis GTPase RsgA (314 aa).

Positions 1 to 21 (MKRAPTKQPAKPAARGGERAQ) are disordered. Positions 85 to 246 (SDQFKSKLFA…LIDSPGFQEF (162 aa)) constitute a CP-type G domain. Residues 134 to 137 (NKID) and 188 to 196 (GQSGMGKST) each bind GTP. C270, C275, H277, and C283 together coordinate Zn(2+).

The protein belongs to the TRAFAC class YlqF/YawG GTPase family. RsgA subfamily. As to quaternary structure, monomer. Associates with 30S ribosomal subunit, binds 16S rRNA. Zn(2+) is required as a cofactor.

It localises to the cytoplasm. Its function is as follows. One of several proteins that assist in the late maturation steps of the functional core of the 30S ribosomal subunit. Helps release RbfA from mature subunits. May play a role in the assembly of ribosomal proteins into the subunit. Circularly permuted GTPase that catalyzes slow GTP hydrolysis, GTPase activity is stimulated by the 30S ribosomal subunit. In Burkholderia pseudomallei (strain 1710b), this protein is Small ribosomal subunit biogenesis GTPase RsgA.